Here is a 948-residue protein sequence, read N- to C-terminus: 3-hydroxy-3-methylglutaryl-coenzyme A reductase (948 aa).

The next 6 helical transmembrane spans lie at 9–25, 55–71, 96–112, 124–140, 207–223, and 286–302; these read LLFF…VLLI, VIIF…VLTC, LILF…VLFV, TSVF…FIVL, IIYI…FMRI, and CWST…ILHL. Asn316 carries an N-linked (GlcNAc...) asparagine glycan. Residues 347–363 form a helical membrane-spanning segment; it reads VINANLVVYLFLGLFLF. The interval 364 to 466 is linker; the sequence is KRIRLNKPIN…MLTEKIKQGL (103 aa). Asn430 carries N-linked (GlcNAc...) asparagine glycosylation. The catalytic stretch occupies residues 467–948; it reads GHELSDTEIL…VNPEISHYTM (482 aa). Catalysis depends on charge relay system residues Glu567, Lys699, and Asp777. The active-site Proton donor is His869. The N-linked (GlcNAc...) asparagine glycan is linked to Asn895.

The protein belongs to the HMG-CoA reductase family.

The protein resides in the endoplasmic reticulum membrane. The protein localises to the peroxisome membrane. The catalysed reaction is (R)-mevalonate + 2 NADP(+) + CoA = (3S)-3-hydroxy-3-methylglutaryl-CoA + 2 NADPH + 2 H(+). It functions in the pathway metabolic intermediate biosynthesis; (R)-mevalonate biosynthesis; (R)-mevalonate from acetyl-CoA: step 3/3. Its function is as follows. This transmembrane glycoprotein is involved in the control of cholesterol and nonsterol isoprenoid compounds biosynthesis. It is the rate-limiting enzyme of sterol biosynthesis. In Schistosoma mansoni (Blood fluke), this protein is 3-hydroxy-3-methylglutaryl-coenzyme A reductase.